The chain runs to 365 residues: sn-glycerol-3-phosphate import ATP-binding protein UgpC (365 aa).

The ABC transporter domain maps to 4 to 234 (LSLRNVQKHY…PASTFVAGFI (231 aa)). 36-43 (GPSGCGKS) provides a ligand contact to ATP.

The protein belongs to the ABC transporter superfamily. sn-glycerol-3-phosphate importer (TC 3.A.1.1.3) family. The complex is composed of two ATP-binding proteins (UgpC), two transmembrane proteins (UgpA and UgpE) and a solute-binding protein (UgpB).

It is found in the cell inner membrane. The catalysed reaction is sn-glycerol 3-phosphate(out) + ATP + H2O = sn-glycerol 3-phosphate(in) + ADP + phosphate + H(+). In terms of biological role, part of the ABC transporter complex UgpBAEC involved in sn-glycerol-3-phosphate (G3P) import. Responsible for energy coupling to the transport system. The protein is sn-glycerol-3-phosphate import ATP-binding protein UgpC of Ralstonia nicotianae (strain ATCC BAA-1114 / GMI1000) (Ralstonia solanacearum).